The primary structure comprises 354 residues: Methylthioribose-1-phosphate isomerase (354 aa).

Residues 45–47 (RGA), arginine 87, and glutamine 204 contribute to the substrate site. Residue aspartate 245 is the Proton donor of the active site. 255 to 256 (NK) is a substrate binding site.

The protein belongs to the eIF-2B alpha/beta/delta subunits family. MtnA subfamily.

It catalyses the reaction 5-(methylsulfanyl)-alpha-D-ribose 1-phosphate = 5-(methylsulfanyl)-D-ribulose 1-phosphate. It functions in the pathway amino-acid biosynthesis; L-methionine biosynthesis via salvage pathway; L-methionine from S-methyl-5-thio-alpha-D-ribose 1-phosphate: step 1/6. Functionally, catalyzes the interconversion of methylthioribose-1-phosphate (MTR-1-P) into methylthioribulose-1-phosphate (MTRu-1-P). This Chlorobaculum tepidum (strain ATCC 49652 / DSM 12025 / NBRC 103806 / TLS) (Chlorobium tepidum) protein is Methylthioribose-1-phosphate isomerase.